A 62-amino-acid chain; its full sequence is Large ribosomal subunit protein bL28 (62 aa).

Residues 1–27 (MARKCVVTGRQTRSGNQRSHAMNSNKR) are disordered. Residues 9–26 (GRQTRSGNQRSHAMNSNK) are compositionally biased toward polar residues.

Belongs to the bacterial ribosomal protein bL28 family.

This Oceanobacillus iheyensis (strain DSM 14371 / CIP 107618 / JCM 11309 / KCTC 3954 / HTE831) protein is Large ribosomal subunit protein bL28.